Here is a 248-residue protein sequence, read N- to C-terminus: Small ribosomal subunit protein uS3 (248 aa).

Positions 39–108 (IRKLVSQKLA…TVAVNVAEIP (70 aa)) constitute a KH type-2 domain. The segment at 212–248 (KTETLARPPRKSDERRREDGERPSRRRPTARRRPGGE) is disordered. The span at 221 to 234 (RKSDERRREDGERP) shows a compositional bias: basic and acidic residues. Residues 235–248 (SRRRPTARRRPGGE) show a composition bias toward basic residues.

The protein belongs to the universal ribosomal protein uS3 family. Part of the 30S ribosomal subunit. Forms a tight complex with proteins S10 and S14.

Its function is as follows. Binds the lower part of the 30S subunit head. Binds mRNA in the 70S ribosome, positioning it for translation. The sequence is that of Small ribosomal subunit protein uS3 from Deinococcus geothermalis (strain DSM 11300 / CIP 105573 / AG-3a).